Consider the following 339-residue polypeptide: Dihydroorotate dehydrogenase (quinone) (339 aa).

FMN contacts are provided by residues 61–65 and T85; that span reads AGLDK. K65 provides a ligand contact to substrate. 110-114 is a binding site for substrate; that stretch reads NRMGF. FMN contacts are provided by N138 and N171. N171 is a binding site for substrate. The active-site Nucleophile is the S174. N176 contacts substrate. K216 and T244 together coordinate FMN. Substrate is bound at residue 245–246; that stretch reads NT. FMN-binding positions include G267, G296, and 317–318; that span reads YS.

This sequence belongs to the dihydroorotate dehydrogenase family. Type 2 subfamily. As to quaternary structure, monomer. FMN is required as a cofactor.

It localises to the cell membrane. The catalysed reaction is (S)-dihydroorotate + a quinone = orotate + a quinol. Its pathway is pyrimidine metabolism; UMP biosynthesis via de novo pathway; orotate from (S)-dihydroorotate (quinone route): step 1/1. Its function is as follows. Catalyzes the conversion of dihydroorotate to orotate with quinone as electron acceptor. This chain is Dihydroorotate dehydrogenase (quinone), found in Pseudomonas fluorescens (strain Pf0-1).